A 404-amino-acid chain; its full sequence is Probable tRNA sulfurtransferase (404 aa).

One can recognise a THUMP domain in the interval Thr60–Thr165. ATP-binding positions include Met183–Leu184, His208–Phe209, Arg265, Gly287, and Gln296.

The protein belongs to the ThiI family.

The protein localises to the cytoplasm. The catalysed reaction is [ThiI sulfur-carrier protein]-S-sulfanyl-L-cysteine + a uridine in tRNA + 2 reduced [2Fe-2S]-[ferredoxin] + ATP + H(+) = [ThiI sulfur-carrier protein]-L-cysteine + a 4-thiouridine in tRNA + 2 oxidized [2Fe-2S]-[ferredoxin] + AMP + diphosphate. The enzyme catalyses [ThiS sulfur-carrier protein]-C-terminal Gly-Gly-AMP + S-sulfanyl-L-cysteinyl-[cysteine desulfurase] + AH2 = [ThiS sulfur-carrier protein]-C-terminal-Gly-aminoethanethioate + L-cysteinyl-[cysteine desulfurase] + A + AMP + 2 H(+). The protein operates within cofactor biosynthesis; thiamine diphosphate biosynthesis. Its function is as follows. Catalyzes the ATP-dependent transfer of a sulfur to tRNA to produce 4-thiouridine in position 8 of tRNAs, which functions as a near-UV photosensor. Also catalyzes the transfer of sulfur to the sulfur carrier protein ThiS, forming ThiS-thiocarboxylate. This is a step in the synthesis of thiazole, in the thiamine biosynthesis pathway. The sulfur is donated as persulfide by IscS. The protein is Probable tRNA sulfurtransferase of Streptococcus pneumoniae serotype 2 (strain D39 / NCTC 7466).